The primary structure comprises 185 residues: Ribosome-recycling factor (185 aa).

The protein belongs to the RRF family.

It is found in the cytoplasm. Its function is as follows. Responsible for the release of ribosomes from messenger RNA at the termination of protein biosynthesis. May increase the efficiency of translation by recycling ribosomes from one round of translation to another. The chain is Ribosome-recycling factor from Ehrlichia ruminantium (strain Gardel).